A 94-amino-acid polypeptide reads, in one-letter code: Aspartyl/glutamyl-tRNA(Asn/Gln) amidotransferase subunit C (94 aa).

This sequence belongs to the GatC family. Heterotrimer of A, B and C subunits.

It carries out the reaction L-glutamyl-tRNA(Gln) + L-glutamine + ATP + H2O = L-glutaminyl-tRNA(Gln) + L-glutamate + ADP + phosphate + H(+). The enzyme catalyses L-aspartyl-tRNA(Asn) + L-glutamine + ATP + H2O = L-asparaginyl-tRNA(Asn) + L-glutamate + ADP + phosphate + 2 H(+). In terms of biological role, allows the formation of correctly charged Asn-tRNA(Asn) or Gln-tRNA(Gln) through the transamidation of misacylated Asp-tRNA(Asn) or Glu-tRNA(Gln) in organisms which lack either or both of asparaginyl-tRNA or glutaminyl-tRNA synthetases. The reaction takes place in the presence of glutamine and ATP through an activated phospho-Asp-tRNA(Asn) or phospho-Glu-tRNA(Gln). The protein is Aspartyl/glutamyl-tRNA(Asn/Gln) amidotransferase subunit C of Caldicellulosiruptor saccharolyticus (strain ATCC 43494 / DSM 8903 / Tp8T 6331).